The following is an 876-amino-acid chain: Aspartate--tRNA(Asp/Asn) ligase (876 aa).

Residues 1–278 (MAATDTPWRP…FGFKRAYEGF (278 aa)) are unknown. Residues 279-876 (MHVYRSHTCG…PKPKKEVKEG (598 aa)) form an aspartyl-tRNA synthetase region. Residue Glu453 participates in L-aspartate binding. The aspartate stretch occupies residues 477–480 (QQFK). Positions 499 and 729 each coordinate L-aspartate. 499-501 (RDE) lines the ATP pocket. Glu763 contacts ATP. Arg770 is an L-aspartate binding site. 815 to 818 (GVDR) is a binding site for ATP.

This sequence belongs to the class-II aminoacyl-tRNA synthetase family. Type 1 subfamily. In terms of assembly, homodimer.

It localises to the cytoplasm. It carries out the reaction tRNA(Asx) + L-aspartate + ATP = L-aspartyl-tRNA(Asx) + AMP + diphosphate. In terms of biological role, aspartyl-tRNA synthetase with relaxed tRNA specificity since it is able to aspartylate not only its cognate tRNA(Asp) but also tRNA(Asn). Reaction proceeds in two steps: L-aspartate is first activated by ATP to form Asp-AMP and then transferred to the acceptor end of tRNA(Asp/Asn). This Paramagnetospirillum magneticum (strain ATCC 700264 / AMB-1) (Magnetospirillum magneticum) protein is Aspartate--tRNA(Asp/Asn) ligase (aspS).